We begin with the raw amino-acid sequence, 310 residues long: Homoserine kinase (310 aa).

Residue 85–95 coordinates ATP; sequence PKGLGLGSSGA.

The protein belongs to the GHMP kinase family. Homoserine kinase subfamily.

It is found in the cytoplasm. It catalyses the reaction L-homoserine + ATP = O-phospho-L-homoserine + ADP + H(+). It participates in amino-acid biosynthesis; L-threonine biosynthesis; L-threonine from L-aspartate: step 4/5. Its function is as follows. Catalyzes the ATP-dependent phosphorylation of L-homoserine to L-homoserine phosphate. This chain is Homoserine kinase, found in Thermoplasma acidophilum (strain ATCC 25905 / DSM 1728 / JCM 9062 / NBRC 15155 / AMRC-C165).